The following is a 2360-amino-acid chain: Protein Ycf2 (2360 aa).

Disordered stretches follow at residues 172 to 193 (SSQLKGSSDQSRDHFDSIGTED), 225 to 255 (TEIESDRFSKGLSGSSSKSRLFTEGEKEMNN), and 944 to 995 (KRKK…KRKE). The span at 234–244 (KGLSGSSSKSR) shows a compositional bias: low complexity. Residues 245-254 (LFTEGEKEMN) show a composition bias toward basic and acidic residues. Basic residues predominate over residues 944–959 (KRKKKKPEKRKKKKPE). Over residues 960 to 993 (KRKEKKPEKRKEKKPEKRKEKKPEKRKEKKPEKR) the composition is skewed to basic and acidic residues. 1425 to 1432 (GSIGSGRS) provides a ligand contact to ATP. Disordered stretches follow at residues 1499-1518 (YEDRDSDDYEPGASDDYEPG), 1843-2031 (LVGS…LLRP), and 2098-2214 (PAEE…DGFS). Residues 1849–2011 (TEEEVEGTEE…VEGTEDEEVE (163 aa)) show a composition bias toward acidic residues. A compositionally biased stretch (basic and acidic residues) spans 2012–2024 (GTEKDSSQFDNDR). Composition is skewed to acidic residues over residues 2098-2115 (PAEEIPEEEDPLPEEALE) and 2122-2197 (GEEE…ENDS).

It belongs to the Ycf2 family.

It localises to the plastid. It is found in the chloroplast stroma. Probable ATPase of unknown function. Its presence in a non-photosynthetic plant (Epifagus virginiana) and experiments in tobacco indicate that it has an essential function which is probably not related to photosynthesis. The sequence is that of Protein Ycf2 from Oenothera argillicola (Appalachian evening primrose).